We begin with the raw amino-acid sequence, 204 residues long: Leucyl/phenylalanyl-tRNA--protein transferase (204 aa).

This sequence belongs to the L/F-transferase family.

It localises to the cytoplasm. The catalysed reaction is N-terminal L-lysyl-[protein] + L-leucyl-tRNA(Leu) = N-terminal L-leucyl-L-lysyl-[protein] + tRNA(Leu) + H(+). It carries out the reaction N-terminal L-arginyl-[protein] + L-leucyl-tRNA(Leu) = N-terminal L-leucyl-L-arginyl-[protein] + tRNA(Leu) + H(+). The enzyme catalyses L-phenylalanyl-tRNA(Phe) + an N-terminal L-alpha-aminoacyl-[protein] = an N-terminal L-phenylalanyl-L-alpha-aminoacyl-[protein] + tRNA(Phe). In terms of biological role, functions in the N-end rule pathway of protein degradation where it conjugates Leu, Phe and, less efficiently, Met from aminoacyl-tRNAs to the N-termini of proteins containing an N-terminal arginine or lysine. The polypeptide is Leucyl/phenylalanyl-tRNA--protein transferase (Rhizobium etli (strain ATCC 51251 / DSM 11541 / JCM 21823 / NBRC 15573 / CFN 42)).